The primary structure comprises 284 residues: Bifunctional protein FolD (284 aa).

NADP(+) is bound by residues 166-168 (GAS) and I232.

This sequence belongs to the tetrahydrofolate dehydrogenase/cyclohydrolase family. Homodimer.

The catalysed reaction is (6R)-5,10-methylene-5,6,7,8-tetrahydrofolate + NADP(+) = (6R)-5,10-methenyltetrahydrofolate + NADPH. The enzyme catalyses (6R)-5,10-methenyltetrahydrofolate + H2O = (6R)-10-formyltetrahydrofolate + H(+). It participates in one-carbon metabolism; tetrahydrofolate interconversion. Its function is as follows. Catalyzes the oxidation of 5,10-methylenetetrahydrofolate to 5,10-methenyltetrahydrofolate and then the hydrolysis of 5,10-methenyltetrahydrofolate to 10-formyltetrahydrofolate. This Shewanella baltica (strain OS223) protein is Bifunctional protein FolD.